We begin with the raw amino-acid sequence, 944 residues long: Weak acid resistance protein 1 (944 aa).

The zn(2)-C6 fungal-type DNA-binding region spans 76 to 109 (CVCCHSLKQKCEPSDVNDIYRKPCRRCLKHKKLC). 2 disordered regions span residues 114–171 (SKRT…AKQF) and 197–225 (SYGAREAETTSTGEITTNNHTKSNGSVPT). At Thr128 the chain carries Phosphothreonine. Polar residues-rich tracts occupy residues 135–144 (VNVSTKSKGP) and 205–225 (TTSTGEITTNNHTKSNGSVPT).

In terms of assembly, homodimer. Post-translationally, phosphorylation is required for PDR12 induction.

The protein localises to the nucleus. In terms of biological role, transcription factor which binds to a weak acid response element (WARE) to mediate stress induction of PDR12 and FUN34, encoding an acid transporter and a putative ammonia transporter, respectively. The sequence is that of Weak acid resistance protein 1 (WAR1) from Saccharomyces cerevisiae (strain ATCC 204508 / S288c) (Baker's yeast).